A 130-amino-acid chain; its full sequence is Small ribosomal subunit protein uS11 (130 aa).

It belongs to the universal ribosomal protein uS11 family. Part of the 30S ribosomal subunit. Interacts with proteins S7 and S18. Binds to IF-3.

Functionally, located on the platform of the 30S subunit, it bridges several disparate RNA helices of the 16S rRNA. Forms part of the Shine-Dalgarno cleft in the 70S ribosome. This Shewanella halifaxensis (strain HAW-EB4) protein is Small ribosomal subunit protein uS11.